We begin with the raw amino-acid sequence, 260 residues long: LOB domain-containing protein 6 (260 aa).

One can recognise an LOB domain in the interval 32-133; it reads SPCAACKFLR…QDLARAKYEL (102 aa).

This sequence belongs to the LOB domain-containing protein family. Interacts with RS2. Expressed in leaves, leaf primordia, immature ears, immature tassels, whole ovules, silk and husk leaves. Found on the adaxial side of organs.

It localises to the nucleus. Its function is as follows. Promotes the switch from proliferation to differentiation in the embryo sac. Negative regulator of cell proliferation in the adaxial side of leaves. Regulates the formation of a symmetric lamina and the establishment of venation. Interacts directly with RS2 (rough sheath 2) to repress some knox homeobox genes. The chain is LOB domain-containing protein 6 (LBD6) from Zea mays (Maize).